The sequence spans 1297 residues: Phosphoribosylformylglycinamidine synthase (1297 aa).

Residues 307 to 318 (GASTGSGGEIRD) and Ala678 contribute to the ATP site. Residues Glu718, Asn722, and Asp886 each contribute to the Mg(2+) site. A Glutamine amidotransferase type-1 domain is found at 1044 to 1297 (MAILREQGVN…MFQNARKYFG (254 aa)). Cys1137 acts as the Nucleophile in catalysis. Active-site residues include His1262 and Glu1264.

The protein in the N-terminal section; belongs to the FGAMS family. Monomer.

The protein resides in the cytoplasm. It catalyses the reaction N(2)-formyl-N(1)-(5-phospho-beta-D-ribosyl)glycinamide + L-glutamine + ATP + H2O = 2-formamido-N(1)-(5-O-phospho-beta-D-ribosyl)acetamidine + L-glutamate + ADP + phosphate + H(+). Its pathway is purine metabolism; IMP biosynthesis via de novo pathway; 5-amino-1-(5-phospho-D-ribosyl)imidazole from N(2)-formyl-N(1)-(5-phospho-D-ribosyl)glycinamide: step 1/2. In terms of biological role, phosphoribosylformylglycinamidine synthase involved in the purines biosynthetic pathway. Catalyzes the ATP-dependent conversion of formylglycinamide ribonucleotide (FGAR) and glutamine to yield formylglycinamidine ribonucleotide (FGAM) and glutamate. This chain is Phosphoribosylformylglycinamidine synthase, found in Vibrio cholerae serotype O1 (strain ATCC 39315 / El Tor Inaba N16961).